Here is a 142-residue protein sequence, read N- to C-terminus: Large ribosomal subunit protein uL13 (142 aa).

This sequence belongs to the universal ribosomal protein uL13 family. In terms of assembly, part of the 50S ribosomal subunit.

In terms of biological role, this protein is one of the early assembly proteins of the 50S ribosomal subunit, although it is not seen to bind rRNA by itself. It is important during the early stages of 50S assembly. The sequence is that of Large ribosomal subunit protein uL13 from Buchnera aphidicola subsp. Acyrthosiphon pisum (strain 5A).